Reading from the N-terminus, the 203-residue chain is MTQVNEMEIELKEPLIPVEEYLAAGVHIGTQQKSEDMKKFIYRVRGDGLYILDIRETDARIKTVAKFLTQYEAPEILVVTSRQYGQYPAKKFADTIGAMSATGRFIPGLLTNPVLDGYIEPKVIVVTDPIGDAQVINEAVQCGIPVVALCDTNNMTKFVDLVIPTNNKGRKALSMIYFLLTREMLRIRGIATSLTQEDFETEI.

The protein belongs to the universal ribosomal protein uS2 family.

This is Small ribosomal subunit protein uS2 from Methanoregula boonei (strain DSM 21154 / JCM 14090 / 6A8).